Reading from the N-terminus, the 338-residue chain is RNA 3'-terminal phosphate cyclase (338 aa).

Residues Gln103 and 283 to 287 (YLADQ) contribute to the ATP site. The active-site Tele-AMP-histidine intermediate is His308.

Belongs to the RNA 3'-terminal cyclase family. Type 1 subfamily.

The protein localises to the cytoplasm. The catalysed reaction is a 3'-end 3'-phospho-ribonucleotide-RNA + ATP = a 3'-end 2',3'-cyclophospho-ribonucleotide-RNA + AMP + diphosphate. In terms of biological role, catalyzes the conversion of 3'-phosphate to a 2',3'-cyclic phosphodiester at the end of RNA. The mechanism of action of the enzyme occurs in 3 steps: (A) adenylation of the enzyme by ATP; (B) transfer of adenylate to an RNA-N3'P to produce RNA-N3'PP5'A; (C) and attack of the adjacent 2'-hydroxyl on the 3'-phosphorus in the diester linkage to produce the cyclic end product. The biological role of this enzyme is unknown but it is likely to function in some aspects of cellular RNA processing. In Escherichia coli O127:H6 (strain E2348/69 / EPEC), this protein is RNA 3'-terminal phosphate cyclase.